The sequence spans 404 residues: LL-diaminopimelate aminotransferase (404 aa).

The substrate site is built by tyrosine 15 and glycine 42. Residues tyrosine 72, 108 to 109 (AK), tyrosine 132, asparagine 188, tyrosine 219, and 247 to 249 (SFS) contribute to the pyridoxal 5'-phosphate site. Residues lysine 109, tyrosine 132, and asparagine 188 each coordinate substrate. Lysine 250 is subject to N6-(pyridoxal phosphate)lysine. Residues arginine 258 and asparagine 288 each contribute to the pyridoxal 5'-phosphate site. Substrate is bound by residues asparagine 288 and arginine 384.

Belongs to the class-I pyridoxal-phosphate-dependent aminotransferase family. LL-diaminopimelate aminotransferase subfamily. Homodimer. The cofactor is pyridoxal 5'-phosphate.

It catalyses the reaction (2S,6S)-2,6-diaminopimelate + 2-oxoglutarate = (S)-2,3,4,5-tetrahydrodipicolinate + L-glutamate + H2O + H(+). It functions in the pathway amino-acid biosynthesis; L-lysine biosynthesis via DAP pathway; LL-2,6-diaminopimelate from (S)-tetrahydrodipicolinate (aminotransferase route): step 1/1. Functionally, involved in the synthesis of meso-diaminopimelate (m-DAP or DL-DAP), required for both lysine and peptidoglycan biosynthesis. Catalyzes the direct conversion of tetrahydrodipicolinate to LL-diaminopimelate. The chain is LL-diaminopimelate aminotransferase from Agathobacter rectalis (strain ATCC 33656 / DSM 3377 / JCM 17463 / KCTC 5835 / VPI 0990) (Eubacterium rectale).